A 914-amino-acid chain; its full sequence is Effector protein hopAE1 (914 aa).

Polar residues predominate over residues 1–13 (MMPSQITRSSHSS). Residues 1–31 (MMPSQITRSSHSSLPEVAPASGDAAGVSEQT) form a disordered region.

Belongs to the HopW family.

Its subcellular location is the secreted. The polypeptide is Effector protein hopAE1 (hopAE1) (Pseudomonas syringae pv. syringae (strain B728a)).